The primary structure comprises 387 residues: Large ribosomal subunit protein uL3 (387 aa).

This sequence belongs to the universal ribosomal protein uL3 family.

The protein localises to the cytoplasm. The sequence is that of Large ribosomal subunit protein uL3 (RPL3) from Kluyveromyces lactis (strain ATCC 8585 / CBS 2359 / DSM 70799 / NBRC 1267 / NRRL Y-1140 / WM37) (Yeast).